A 294-amino-acid polypeptide reads, in one-letter code: Acetylglutamate kinase (294 aa).

Substrate-binding positions include Gly-63–Gly-64, Arg-85, and Asn-188.

Belongs to the acetylglutamate kinase family. ArgB subfamily.

The protein resides in the cytoplasm. The enzyme catalyses N-acetyl-L-glutamate + ATP = N-acetyl-L-glutamyl 5-phosphate + ADP. It functions in the pathway amino-acid biosynthesis; L-arginine biosynthesis; N(2)-acetyl-L-ornithine from L-glutamate: step 2/4. Its function is as follows. Catalyzes the ATP-dependent phosphorylation of N-acetyl-L-glutamate. The protein is Acetylglutamate kinase of Methanococcus maripaludis (strain C5 / ATCC BAA-1333).